A 271-amino-acid polypeptide reads, in one-letter code: ATP synthase subunit a (271 aa).

A run of 5 helical transmembrane segments spans residues 38 to 58 (FWTL…LFLV), 100 to 120 (LIAP…LMDL), 146 to 166 (DVNI…FYSI), 220 to 240 (LIFI…LNVP), and 242 to 262 (AIFH…LTIV).

This sequence belongs to the ATPase A chain family. As to quaternary structure, F-type ATPases have 2 components, CF(1) - the catalytic core - and CF(0) - the membrane proton channel. CF(1) has five subunits: alpha(3), beta(3), gamma(1), delta(1), epsilon(1). CF(0) has three main subunits: a(1), b(2) and c(9-12). The alpha and beta chains form an alternating ring which encloses part of the gamma chain. CF(1) is attached to CF(0) by a central stalk formed by the gamma and epsilon chains, while a peripheral stalk is formed by the delta and b chains.

The protein resides in the cell inner membrane. In terms of biological role, key component of the proton channel; it plays a direct role in the translocation of protons across the membrane. The sequence is that of ATP synthase subunit a from Salmonella arizonae (strain ATCC BAA-731 / CDC346-86 / RSK2980).